The following is a 276-amino-acid chain: Proteasome subunit beta type-8 (276 aa).

Positions 1-72 (MALLDLCGAP…RKVQIEMAHG (72 aa)) are cleaved as a propeptide — removed in mature form. The active-site Nucleophile is threonine 73.

This sequence belongs to the peptidase T1B family. The 26S proteasome consists of a 20S proteasome core and two 19S regulatory subunits. The 20S proteasome core is composed of 28 subunits that are arranged in four stacked rings, resulting in a barrel-shaped structure. The two end rings are each formed by seven alpha subunits, and the two central rings are each formed by seven beta subunits. The catalytic chamber with the active sites is on the inside of the barrel. Component of the immunoproteasome, where it displaces the equivalent housekeeping subunit PSMB5. Component of the spermatoproteasome, a form of the proteasome specifically found in testis. Directly interacts with POMP. Interacts with TAP1. In terms of processing, autocleaved. The resulting N-terminal Thr residue of the mature subunit is responsible for the nucleophile proteolytic activity.

It localises to the cytoplasm. The protein resides in the nucleus. It carries out the reaction Cleavage of peptide bonds with very broad specificity.. The proteasome is a multicatalytic proteinase complex which is characterized by its ability to cleave peptides with Arg, Phe, Tyr, Leu, and Glu adjacent to the leaving group at neutral or slightly basic pH. The proteasome has an ATP-dependent proteolytic activity. This subunit is involved in antigen processing to generate class I binding peptides. May participate in the generation of spliced peptides resulting from the ligation of two separate proteasomal cleavage products that are not contiguous in the parental protein. Required for adipocyte differentiation. The protein is Proteasome subunit beta type-8 (Psmb8) of Rattus norvegicus (Rat).